The primary structure comprises 345 residues: N-acetyl-gamma-glutamyl-phosphate reductase (345 aa).

Cysteine 149 is a catalytic residue.

Belongs to the NAGSA dehydrogenase family. Type 1 subfamily.

The protein localises to the cytoplasm. The catalysed reaction is N-acetyl-L-glutamate 5-semialdehyde + phosphate + NADP(+) = N-acetyl-L-glutamyl 5-phosphate + NADPH + H(+). Its pathway is amino-acid biosynthesis; L-arginine biosynthesis; N(2)-acetyl-L-ornithine from L-glutamate: step 3/4. Functionally, catalyzes the NADPH-dependent reduction of N-acetyl-5-glutamyl phosphate to yield N-acetyl-L-glutamate 5-semialdehyde. In Bacillus cereus (strain B4264), this protein is N-acetyl-gamma-glutamyl-phosphate reductase.